The primary structure comprises 500 residues: Lysine--tRNA ligase (500 aa).

2 residues coordinate Mg(2+): Glu-406 and Glu-413.

The protein belongs to the class-II aminoacyl-tRNA synthetase family. As to quaternary structure, homodimer. Mg(2+) serves as cofactor.

Its subcellular location is the cytoplasm. The enzyme catalyses tRNA(Lys) + L-lysine + ATP = L-lysyl-tRNA(Lys) + AMP + diphosphate. This Sulfolobus acidocaldarius (strain ATCC 33909 / DSM 639 / JCM 8929 / NBRC 15157 / NCIMB 11770) protein is Lysine--tRNA ligase.